A 147-amino-acid polypeptide reads, in one-letter code: UPF0735 ACT domain-containing protein GTNG_2535 (147 aa).

An ACT domain is found at threonine 69–serine 144.

Belongs to the UPF0735 family.

This Geobacillus thermodenitrificans (strain NG80-2) protein is UPF0735 ACT domain-containing protein GTNG_2535.